The chain runs to 420 residues: F-box/LRR-repeat protein At2g43260 (420 aa).

The F-box domain maps to 7–53 (NPNSIDILPELLEEVLLRLPTKSILKCRIVSKQWRSLLESSRFAERH). LRR repeat units follow at residues 112-135 (QDWIIVLNPSTSQLRRFPSGLNHN) and 226-251 (VYRILALDLHKEEFHKVPVPPTQITV).

In Arabidopsis thaliana (Mouse-ear cress), this protein is F-box/LRR-repeat protein At2g43260.